Reading from the N-terminus, the 495-residue chain is Iroquois-class homeodomain protein irx-4-B (495 aa).

Residues 141 to 203 (GSTRRKNATR…NARRRLKKEN (63 aa)) constitute a DNA-binding region (homeobox; TALE-type). The segment at 203–245 (NKMTWPPRNKCSDEKRPYDEEEEEEEDSQKATIKNEKKTVDEE) is disordered. Residues 235–245 (IKNEKKTVDEE) are compositionally biased toward basic and acidic residues.

The protein belongs to the TALE/IRO homeobox family.

The protein resides in the nucleus. In terms of biological role, acts partially redundantly with other irx members in neural patterning. Required for formation of the posterior forebrain, midbrain, hindbrain, and to a lesser extent, spinal cord. Patterns the neuroectoderm in both the anterior/posterior and dorsal/ventral axes. Does not appear to play a role in pronephros kidney development. The chain is Iroquois-class homeodomain protein irx-4-B (irx4-b) from Xenopus laevis (African clawed frog).